We begin with the raw amino-acid sequence, 258 residues long: Probable enoyl-CoA hydratase (258 aa).

Belongs to the enoyl-CoA hydratase/isomerase family.

It catalyses the reaction a (3S)-3-hydroxyacyl-CoA = a (2E)-enoyl-CoA + H2O. It carries out the reaction a 4-saturated-(3S)-3-hydroxyacyl-CoA = a (3E)-enoyl-CoA + H2O. It functions in the pathway lipid metabolism; fatty acid beta-oxidation. Involved in the degradation of long-chain fatty acids. This Bacillus subtilis (strain 168) protein is Probable enoyl-CoA hydratase (fadB).